Here is a 959-residue protein sequence, read N- to C-terminus: Ataxin-2 homolog (959 aa).

Positions 13–92 (DVLSAINDMI…IVDFAYVTQE (80 aa)) constitute a Sm domain. Disordered stretches follow at residues 203 to 378 (AREI…GSRV), 392 to 484 (TAPK…SVIT), 501 to 528 (PRVAPATPTATTPVQNEYHPQQQPHPAM), 697 to 831 (PPQG…QHIQ), and 867 to 959 (PMQQ…QSPP). Over residues 226–235 (DLDKITRQED) the composition is skewed to basic and acidic residues. Residues 246 to 260 (NNSFNQQQQQRRNPN) are compositionally biased toward low complexity. Residues 270 to 281 (RRAEGLRGDRRN) show a composition bias toward basic and acidic residues. Residues 282-313 (SGSSSANNSRYGAPAAAQQNYSQNQQQQQGQK) are compositionally biased toward low complexity. 2 stretches are compositionally biased toward polar residues: residues 341-356 (RQQQKQMLDPRPNNNV) and 473-484 (VSVTSENDSVIT). Composition is skewed to low complexity over residues 504 to 528 (APATPTATTPVQNEYHPQQQPHPAM), 697 to 707 (PPQGQQQQPRY), and 715 to 725 (QQQQQQPQQQQ). 2 stretches are compositionally biased toward polar residues: residues 726-742 (FSGEQSRPQSHPNSQPT) and 756-765 (APQNGNMQAE). Low complexity predominate over residues 766-788 (SSSNASHSGSTSSQSGQRSGSPP). Positions 789–798 (GAVPPPPPPQ) are enriched in pro residues. 3 stretches are compositionally biased toward low complexity: residues 822–831 (MMQQQQQHIQ), 867–876 (PMQQNQHPQQ), and 902–911 (QQQQQQQQQQ). A compositionally biased stretch (polar residues) spans 912 to 922 (MHRQNSLPQQF). Residues 923–935 (QGNQGVNPSGQQS) show a composition bias toward low complexity. Residues 948-959 (TPRDQQHSQSPP) are compositionally biased toward polar residues.

Belongs to the ataxin-2 family. As to quaternary structure, interacts (via C-terminus) with szy-20 (via C-terminus); the interaction is RNA independent. Interacts with pab-1. Interacts with gdi-1. As to expression, expressed in the central nervous system, dorsal and ventral nerve cord, intestinal lining and body-wall muscle. Expressed in the gonad.

It localises to the cytoplasm. The protein localises to the nucleus. Functionally, probable RNA-binding protein that negatively regulates the translation of targets. Functions with RNA-binding protein szy-20 to ensure embryonic cell division, and to this end, plays a role in the regulation of centrosome assembly, position and size, and in astral microtubule outgrowth and nucleation. Required for gonad development, germ cell proliferation and for the production of oocytes. Regulates whole body growth and fat accumulation in response to food availability, and this may be through the mTOR pathway, upstream of daf-15 and rheb-1. The chain is Ataxin-2 homolog from Caenorhabditis elegans.